Consider the following 181-residue polypeptide: Oleosin (181 aa).

The disordered stretch occupies residues 1-28 (TTTTYDRHFTTTQPHYRQDDRSRYDQQT). Residues 1 to 38 (TTTTYDRHFTTTQPHYRQDDRSRYDQQTHSQSTSRTLA) form a polar region. The segment covering 16–26 (YRQDDRSRYDQ) has biased composition (basic and acidic residues). The next 3 helical transmembrane spans lie at 38–58 (AIIA…LTFI), 69–89 (PLFV…GLAV), and 90–110 (TGFL…SYLF). The segment at 39–110 (IIALLPVGGI…TGLSSLSYLF (72 aa)) is hydrophobic. Positions 155-181 (EMGDQGQVGVHAQVGGGKEGRKSGDRT) are disordered. Positions 158-167 (DQGQVGVHAQ) are enriched in low complexity. Residues 172–181 (KEGRKSGDRT) show a composition bias toward basic and acidic residues.

This sequence belongs to the oleosin family.

It localises to the lipid droplet. It is found in the membrane. Its function is as follows. May have a structural role to stabilize the lipid body during desiccation of the seed by preventing coalescence of the oil. Probably interacts with both lipid and phospholipid moieties of lipid bodies. May also provide recognition signals for specific lipase anchorage in lipolysis during seedling growth. This is Oleosin from Helianthus annuus (Common sunflower).